We begin with the raw amino-acid sequence, 142 residues long: MQHARKKFRVGRTSSHNRCMLANMLKSLIHYERIETTLPKAKELRRHADKMITLAKKNSLAARRIAIGRLMVRYNKLTSKEARQAKGGDTSVYNVDRLVVNKLFDELGNRFVERKGGYTRILKLQNRIGDNAQKCIIEFLAS.

Belongs to the bacterial ribosomal protein bL17 family. As to quaternary structure, part of the 50S ribosomal subunit. Contacts protein L32.

The sequence is that of Large ribosomal subunit protein bL17 from Chlamydia pneumoniae (Chlamydophila pneumoniae).